A 314-amino-acid chain; its full sequence is Ferredoxin:CoB-CoM heterodisulfide reductase subunit B (314 aa).

The protein belongs to the HdrB family. As to quaternary structure, the ferredoxin:CoB-CoM heterodisulfide reductase is composed of three subunits; HdrA1, HdrB1 and HdrC1. It depends on [4Fe-4S] cluster as a cofactor.

The protein localises to the cytoplasm. It catalyses the reaction coenzyme B + coenzyme M + 2 oxidized [2Fe-2S]-[ferredoxin] = coenzyme M-coenzyme B heterodisulfide + 2 reduced [2Fe-2S]-[ferredoxin] + 2 H(+). Its pathway is cofactor metabolism; coenzyme M-coenzyme B heterodisulfide reduction; coenzyme B and coenzyme M from coenzyme M-coenzyme B heterodisulfide: step 1/1. Its function is as follows. Part of a complex that catalyzes the reversible reduction of CoM-S-S-CoB to the thiol-coenzymes H-S-CoM (coenzyme M) and H-S-CoB (coenzyme B). Probably involved in methylotrophic methanogenesis but not in aceticlastic methanogenesis. The polypeptide is Ferredoxin:CoB-CoM heterodisulfide reductase subunit B (Methanosarcina acetivorans (strain ATCC 35395 / DSM 2834 / JCM 12185 / C2A)).